A 153-amino-acid polypeptide reads, in one-letter code: Bacteriohemerythrin (153 aa).

Fe cation contacts are provided by His-21, His-57, Glu-61, His-76, His-80, His-115, and Asp-120.

This sequence belongs to the hemerythrin family. As to quaternary structure, monomer.

Its function is as follows. Oxygen-binding protein. May be involved in a storage mechanism or for delivery to oxygen-requiring enzymes. The oxygen-binding site contains two iron atoms. The chain is Bacteriohemerythrin from Pseudomonas paraeruginosa (strain DSM 24068 / PA7) (Pseudomonas aeruginosa (strain PA7)).